The primary structure comprises 794 residues: Kinesin-like protein KIN-13A (794 aa).

In terms of domain architecture, Kinesin motor spans 193–526; that stretch reads KIKVVVRKRP…LRYADRVKSL (334 aa). 282-289 contributes to the ATP binding site; the sequence is GQTGSGKT. A disordered region spans residues 525 to 699; sequence SLSKSGNSKK…YETASRQYET (175 aa). Residues 569 to 579 show a composition bias toward basic and acidic residues; sequence ETRRRVVEKDS. Polar residues-rich tracts occupy residues 580–593 and 611–632; these read NSST…QPTN and EPNS…YPQE. The span at 650-668 shows a compositional bias: basic and acidic residues; it reads GLREEKPDRPQNWSKRDVS. The segment covering 669–696 has biased composition (polar residues); sequence SSDIPTLTNFRQNASETASRQYETASRQ. A coiled-coil region spans residues 705–742; the sequence is ENLDALLEEEEALIAAHRKEIEDTMEIVREEMKLLAEV.

The protein belongs to the TRAFAC class myosin-kinesin ATPase superfamily. Kinesin family. KIN-13 subfamily. As to quaternary structure, component of the active ARAC10-IRC5-KIN13A complex. Interacts (via-C-terminus) with ICR2 and ICR5 (via N-terminus). No interactions with ICR1. As to expression, expressed in leaves, roots, young and mature seedlings. Preferentially expressed in the secondary cell wall pits of differentiating metaxylem vessel cells (at the protein level).

Its subcellular location is the golgi apparatus. It is found in the golgi stack. The protein localises to the cytoplasm. The protein resides in the cytoskeleton. In terms of biological role, internal motor kinesin involved in trichome morphogenesis. Participates in regulating the formation of Golgi-associated vesicles. Plays a central role in microtubule disassembly via the active ARAC10-ICR5 cascade, which establishes the secondary cell wall pattern in metaxylem vessel cells. Acts redundantly with KIN13B to modulate cell wall synthesis and cell expansion via the THE1 pathway. The polypeptide is Kinesin-like protein KIN-13A (Arabidopsis thaliana (Mouse-ear cress)).